A 310-amino-acid polypeptide reads, in one-letter code: Elongation factor Ts, mitochondrial (310 aa).

The N-terminal 42 residues, 1-42 (MGFQVLRSVIQAPLAKRSFLCKSCPSGLRVLYNNILLSSRSY), are a transit peptide targeting the mitochondrion.

It belongs to the EF-Ts family.

It is found in the mitochondrion. Functionally, associates with the EF-Tu.GDP complex and induces the exchange of GDP to GTP. It remains bound to the aminoacyl-tRNA.EF-Tu.GTP complex up to the GTP hydrolysis stage on the ribosome. This is Elongation factor Ts, mitochondrial (tsf1) from Schizosaccharomyces japonicus (strain yFS275 / FY16936) (Fission yeast).